The following is a 290-amino-acid chain: Festuclavine dehydrogenase easG (290 aa).

It belongs to the fgaFS/easG family.

The enzyme catalyses festuclavine + NAD(+) = 6,8-dimethyl-6,7-didehydroergoline + NADH + H(+). It functions in the pathway alkaloid biosynthesis; ergot alkaloid biosynthesis. Festuclavine dehydrogenase; part of the gene cluster that mediates the biosynthesis of fumiclavanine C, a fungal ergot alkaloid. DmaW catalyzes the first step of ergot alkaloid biosynthesis by condensing dimethylallyl diphosphate (DMAP) and tryptophan to form 4-dimethylallyl-L-tryptophan. The second step is catalyzed by the methyltransferase easF that methylates 4-dimethylallyl-L-tryptophan in the presence of S-adenosyl-L-methionine, resulting in the formation of 4-dimethylallyl-L-abrine. The catalase easC and the FAD-dependent oxidoreductase easE then transform 4-dimethylallyl-L-abrine to chanoclavine-I which is further oxidized by EasD in the presence of NAD(+), resulting in the formation of chanoclavine-I aldehyde. EasA reduces chanoclavine-I aldehyde to dihydrochanoclavine-I aldehyde that spontaneously dehydrates to form 6,8-dimethyl-6,7-didehydroergoline. EasG then catalyzes the reduction of 6,8-dimethyl-6,7-didehydroergoline to form festuclavine. Hydrolysis of festuclavine by easM then leads to the formation of fumigaclavine B which is in turn acetylated by easN to fumigaclavine A. Finally, easL catalyzes the conversion of fumigaclavine A into fumigaclavine C by attaching a dimethylallyl moiety to C-2 of the indole nucleus. The sequence is that of Festuclavine dehydrogenase easG from Aspergillus fumigatus (strain ATCC MYA-4609 / CBS 101355 / FGSC A1100 / Af293) (Neosartorya fumigata).